Reading from the N-terminus, the 393-residue chain is 1-deoxy-D-xylulose 5-phosphate reductoisomerase (393 aa).

NADPH is bound by residues Thr-10, Gly-11, Ser-12, Ile-13, Arg-37, Gln-38, and Asn-124. Residue Lys-125 participates in 1-deoxy-D-xylulose 5-phosphate binding. Glu-126 lines the NADPH pocket. Asp-150 is a Mn(2+) binding site. The 1-deoxy-D-xylulose 5-phosphate site is built by Ser-151, Glu-152, Ser-179, and His-202. Glu-152 lines the Mn(2+) pocket. Gly-208 serves as a coordination point for NADPH. 1-deoxy-D-xylulose 5-phosphate contacts are provided by Ser-215, Asn-220, Lys-221, and Glu-224. Glu-224 contributes to the Mn(2+) binding site.

The protein belongs to the DXR family. It depends on Mg(2+) as a cofactor. Mn(2+) is required as a cofactor.

The catalysed reaction is 2-C-methyl-D-erythritol 4-phosphate + NADP(+) = 1-deoxy-D-xylulose 5-phosphate + NADPH + H(+). It participates in isoprenoid biosynthesis; isopentenyl diphosphate biosynthesis via DXP pathway; isopentenyl diphosphate from 1-deoxy-D-xylulose 5-phosphate: step 1/6. Catalyzes the NADPH-dependent rearrangement and reduction of 1-deoxy-D-xylulose-5-phosphate (DXP) to 2-C-methyl-D-erythritol 4-phosphate (MEP). The chain is 1-deoxy-D-xylulose 5-phosphate reductoisomerase from Cupriavidus taiwanensis (strain DSM 17343 / BCRC 17206 / CCUG 44338 / CIP 107171 / LMG 19424 / R1) (Ralstonia taiwanensis (strain LMG 19424)).